Reading from the N-terminus, the 480-residue chain is MGLVIYDTLARRKVPFEPAVPGHVGIYVCGPTVYSDPHLGHARGPVVYDILRRYFLHKGYKVRFVSNITDVGHLTDDADEGEDKIVRRAKLERLEPMEVADKYMWSYFDAMQALNVLRPSIAPRASGHIPEMLELTERLLARGHAYERKGSVYFRVRSFPEYGKLSGKRLEELRAGARVEVREEKEDPLDFALWKAAEPGHIMRWKSPWGEGYPGWHIECTAMSLKYLGEGFDLHAGGIDLQFPHHECEIAQAEAAGFRFARHWMHHNHVLLEGEKMAKSTGNLVLLHDLLEAHEPMALRFYLLQTHYRSPMDFTWEGLESAKRGYGRLLHAYREVRGRKKTAPPGTTPELERALDALEKAFMEAIEDDLSTPEALAALFAFLPELHKLLPEAKAESLARAEAVFHTLGEGILGLFPERVLEERVSGPLLEGLIALLLELREEARRAKDYEKSDLIRERLRALGVIVEDTKEGPRWRLER.

Position 29 (cysteine 29) interacts with Zn(2+). Residues 31 to 41 (PTVYSDPHLGH) carry the 'HIGH' region motif. Residues cysteine 220, histidine 245, and glutamate 249 each contribute to the Zn(2+) site. The short motif at 276–280 (KMAKS) is the 'KMSKS' region element. Lysine 279 contacts ATP.

Belongs to the class-I aminoacyl-tRNA synthetase family. As to quaternary structure, monomer. The cofactor is Zn(2+).

Its subcellular location is the cytoplasm. It catalyses the reaction tRNA(Cys) + L-cysteine + ATP = L-cysteinyl-tRNA(Cys) + AMP + diphosphate. In Thermus thermophilus (strain ATCC BAA-163 / DSM 7039 / HB27), this protein is Cysteine--tRNA ligase.